Reading from the N-terminus, the 43-residue chain is Protein PsbN (43 aa).

Residues Leu7–Phe27 traverse the membrane as a helical segment.

This sequence belongs to the PsbN family.

It localises to the cellular thylakoid membrane. Functionally, may play a role in photosystem I and II biogenesis. This Synechococcus sp. (strain JA-2-3B'a(2-13)) (Cyanobacteria bacterium Yellowstone B-Prime) protein is Protein PsbN.